The primary structure comprises 329 residues: Protein-arginine N-acetylglucosaminyltransferase NleB1 (329 aa).

N-beta-linked (GlcNAc) arginine; by autocatalysis glycosylation occurs at Arg13. Residue 48 to 50 (QWF) participates in UDP-N-acetyl-alpha-D-glucosamine binding. The N-beta-linked (GlcNAc) arginine; by autocatalysis glycan is linked to Arg53. Tyr72 contacts UDP-N-acetyl-alpha-D-glucosamine. Arg159 carries an N-beta-linked (GlcNAc) arginine; by autocatalysis glycan. UDP-N-acetyl-alpha-D-glucosamine is bound at residue 219 to 222 (YLDA). A DXD motif motif is present at residues 221 to 223 (DAD). Asp223 is a binding site for Mn(2+). Glu253 (proton acceptor) is an active-site residue. Arg293 is a glycosylation site (N-beta-linked (GlcNAc) arginine; by autocatalysis). Mn(2+)-binding residues include Asn320 and Ser322. UDP-N-acetyl-alpha-D-glucosamine is bound by residues Ser322 and 327 to 329 (SSW).

It belongs to the glycosyltransferase NleB family. Mn(2+) is required as a cofactor. Auto-glycosylated: arginine GlcNAcylation is required for activity toward death domain-containing host target proteins.

It localises to the secreted. Its subcellular location is the host cytoplasm. The catalysed reaction is L-arginyl-[protein] + UDP-N-acetyl-alpha-D-glucosamine = N(omega)-(N-acetyl-beta-D-glucosaminyl)-L-arginyl-[protein] + UDP + H(+). Its function is as follows. Protein-arginine N-acetylglucosaminyltransferase effector that disrupts TNF signaling in infected cells, including NF-kappa-B signaling, apoptosis and necroptosis. Acts by catalyzing the transfer of a single N-acetylglucosamine (GlcNAc) to a conserved arginine residue in the death domain of host proteins FADD, TRADD, FAS, TNFRSF1A/TNFR1, TNFRSF25/DR3 and RIPK1: arginine GlcNAcylation prevents homotypic/heterotypic death domain interactions and assembly of the oligomeric TNF-alpha receptor complex, thereby disrupting TNF signaling. Has preference for host FADD as substrate compared to other death domain-containing proteins. Also acts on host proteins without a death domain: catalyzes arginine GlcNAcylation of HIF1A, thereby regulating host glucose metabolism. Also displays intra-bacterial activity by mediating GlcNAcylation of glutathione synthetase GshB. Catalyzes auto-GlcNAcylation, which is required for activity toward death domain-containing host target proteins. Shows a higher enzymatic activity than NleB2. In Escherichia coli O127:H6 (strain E2348/69 / EPEC), this protein is Protein-arginine N-acetylglucosaminyltransferase NleB1.